Consider the following 120-residue polypeptide: Prefoldin subunit beta (120 aa).

The protein belongs to the prefoldin subunit beta family. As to quaternary structure, heterohexamer of two alpha and four beta subunits.

The protein resides in the cytoplasm. Molecular chaperone capable of stabilizing a range of proteins. Seems to fulfill an ATP-independent, HSP70-like function in archaeal de novo protein folding. The chain is Prefoldin subunit beta from Methanothrix thermoacetophila (strain DSM 6194 / JCM 14653 / NBRC 101360 / PT) (Methanosaeta thermophila).